The chain runs to 743 residues: NAD(P)H-quinone oxidoreductase subunit 5, chloroplastic (743 aa).

16 helical membrane-spanning segments follow: residues 9-29 (WIIPFLPLPVPMLIGLGLLLF), 40-60 (WAFQSVLLLSIVMIFSMNLSI), 89-109 (IDPLTSIMSILITTVGIMVLI), 125-145 (FAYMSFFSTSMLGLVTSSNLI), 147-167 (IYIFWELVGMCSYLLIGFWFT), 185-205 (GDFGLLLGILGFYWITGSFEF), 219-239 (NEVNFLFVTLCAVLLFAGAIA), 258-278 (TPISALIHAATMVAAGIFLVA), 284-304 (FIVIPHIMNLISLIGIITVFF), 327-347 (LGYMMLALGMGSYRSALFHLI), 354-374 (ALLFLGSGSVIHSMETLVGYC), 396-416 (NSFLLGTLSLCGIPPLACFWS), 425-445 (WLYSPIFAIIAWSTAGLTAFY), 551-571 (LFPILILILFTLFVGFLGIPF), 607-627 (VFSVSIASFGIYIAFFLYKPV), and 723-743 (YLFFYFSYVSIFLFIYYFLNL).

It belongs to the complex I subunit 5 family. As to quaternary structure, NDH is composed of at least 16 different subunits, 5 of which are encoded in the nucleus.

Its subcellular location is the plastid. The protein resides in the chloroplast thylakoid membrane. The catalysed reaction is a plastoquinone + NADH + (n+1) H(+)(in) = a plastoquinol + NAD(+) + n H(+)(out). It catalyses the reaction a plastoquinone + NADPH + (n+1) H(+)(in) = a plastoquinol + NADP(+) + n H(+)(out). NDH shuttles electrons from NAD(P)H:plastoquinone, via FMN and iron-sulfur (Fe-S) centers, to quinones in the photosynthetic chain and possibly in a chloroplast respiratory chain. The immediate electron acceptor for the enzyme in this species is believed to be plastoquinone. Couples the redox reaction to proton translocation, and thus conserves the redox energy in a proton gradient. This is NAD(P)H-quinone oxidoreductase subunit 5, chloroplastic (ndhF) from Ambrosia trifida (Giant ragweed).